Reading from the N-terminus, the 438-residue chain is Actin-like protein 7A (438 aa).

Positions 36-56 are required for interaction with TES; the sequence is ASLKDGPAKRAVWVRRDHSEP.

This sequence belongs to the actin family. As to quaternary structure, interacts (via N-terminus) with TES (via LIM domain 2). Heterodimer with TES; the heterodimer interacts with ENAH to form a heterotrimer. Interacts with ACTL9. Interacts with CYLC1; the interaction may be relevant for proper acrosome attachment to the nuclear envelope.

It is found in the cytoplasm. The protein resides in the cytoskeleton. The protein localises to the golgi apparatus. Its subcellular location is the nucleus. In terms of biological role, essential for normal spermatogenesis and male fertility. Required for normal sperm head morphology, acroplaxome formation, acrosome attachment, and acrosome granule stability. May anchor and stabilize acrosomal adherence to the acroplaxome at least in part by facilitating the presence of F-actin in the subacrosomal space. May play an important role in formation and fusion of Golgi-derived vesicles during acrosome biogenesis. In Bos taurus (Bovine), this protein is Actin-like protein 7A (ACTL7A).